Reading from the N-terminus, the 314-residue chain is Homoserine kinase (314 aa).

An ATP-binding site is contributed by 95-105 (PHSRGLGSSAA).

It belongs to the GHMP kinase family. Homoserine kinase subfamily.

The protein localises to the cytoplasm. It catalyses the reaction L-homoserine + ATP = O-phospho-L-homoserine + ADP + H(+). It participates in amino-acid biosynthesis; L-threonine biosynthesis; L-threonine from L-aspartate: step 4/5. Functionally, catalyzes the ATP-dependent phosphorylation of L-homoserine to L-homoserine phosphate. This Mycobacterium sp. (strain KMS) protein is Homoserine kinase.